The sequence spans 234 residues: Thymidine kinase, cytosolic (234 aa).

The residue at position 2 (Ser-2) is an N-acetylserine. A phosphoserine mark is found at Ser-2 and Ser-13. ATP is bound by residues 26–33 (GPMFSGKS), 58–60 (DTR), and 97–100 (DEGQ). Residue Glu-98 is the Proton acceptor of the active site. Phe-128 is a substrate binding site. Zn(2+) is bound by residues Cys-153 and Cys-156. Substrate-binding positions include 172 to 176 (VEVIG) and Tyr-181. The Zn(2+) site is built by Cys-185 and Cys-188. The KEN box motif lies at 203–205 (KEN). A Phosphoserine modification is found at Ser-231.

This sequence belongs to the thymidine kinase family. Homotetramer. Tetramerization from dimerization is induced by ATP and increases catalytic efficiency due to a high affinity for thymidine. Tetramerization is inhibited by phosphorylation at Ser-13. Interacts (via the KEN box) with FZR1. Phosphorylated on Ser-13 in mitosis. Phosphorylation of Ser-13 by CDK1 during mitosis reduces homotetramerization and catalytic efficiency when DNA replication is complete and intracellular TK1 is still present at a high level. In terms of processing, polyubiquitinated. Postmitosis, ubiquitination leads to proteasomal degradation. The KEN box sequence located at the C-terminal region targets for degradation by the anaphase promoting complex (APC/C) activated and rate-limited by FZR1.

The protein resides in the cytoplasm. It catalyses the reaction thymidine + ATP = dTMP + ADP + H(+). In terms of biological role, cell-cycle-regulated enzyme of importance in nucleotide metabolism. Catalyzes the first enzymatic step in the salvage pathway converting thymidine into thymidine monophosphate. Transcriptional regulation limits expression to the S phase of the cell cycle and transient expression coincides with the oscillation in the intracellular dTTP concentration. Also important for the activation of anticancer and antiviral nucleoside analog prodrugs such as 1-b-d-arabinofuranosylcytosine (AraC) and 3c-azido-3c-deoxythymidine (AZT). In Homo sapiens (Human), this protein is Thymidine kinase, cytosolic.